We begin with the raw amino-acid sequence, 354 residues long: Nicotinate-nucleotide--dimethylbenzimidazole phosphoribosyltransferase (354 aa).

The active-site Proton acceptor is Glu-313.

Belongs to the CobT family.

It catalyses the reaction 5,6-dimethylbenzimidazole + nicotinate beta-D-ribonucleotide = alpha-ribazole 5'-phosphate + nicotinate + H(+). It functions in the pathway nucleoside biosynthesis; alpha-ribazole biosynthesis; alpha-ribazole from 5,6-dimethylbenzimidazole: step 1/2. Its function is as follows. Catalyzes the synthesis of alpha-ribazole-5'-phosphate from nicotinate mononucleotide (NAMN) and 5,6-dimethylbenzimidazole (DMB). The chain is Nicotinate-nucleotide--dimethylbenzimidazole phosphoribosyltransferase from Ralstonia nicotianae (strain ATCC BAA-1114 / GMI1000) (Ralstonia solanacearum).